The chain runs to 389 residues: 26S proteasome non-ATPase regulatory subunit 6 (389 aa).

Positions 193–361 (DFKQAAELFL…EIVETNRPDS (169 aa)) constitute a PCI domain.

The protein belongs to the proteasome subunit S10 family. As to quaternary structure, component of the 19S proteasome regulatory particle complex. The 26S proteasome consists of a 20S core particle (CP) and two 19S regulatory subunits (RP). The regulatory particle is made of a lid composed of 9 subunits including PSMD6, a base containing 6 ATPases and few additional components.

Functionally, component of the 26S proteasome, a multiprotein complex involved in the ATP-dependent degradation of ubiquitinated proteins. This complex plays a key role in the maintenance of protein homeostasis by removing misfolded or damaged proteins, which could impair cellular functions, and by removing proteins whose functions are no longer required. Therefore, the proteasome participates in numerous cellular processes, including cell cycle progression, apoptosis, or DNA damage repair. This Mus musculus (Mouse) protein is 26S proteasome non-ATPase regulatory subunit 6 (Psmd6).